The sequence spans 235 residues: Small ribosomal subunit protein uS3 (235 aa).

The KH type-2 domain maps to 39–107; it reads VRKFLNKELA…PAQINIAEVK (69 aa). Positions 215 to 235 are disordered; that stretch reads AQSEQQPADKPKKAPRGKGRK.

This sequence belongs to the universal ribosomal protein uS3 family. In terms of assembly, part of the 30S ribosomal subunit. Forms a tight complex with proteins S10 and S14.

Functionally, binds the lower part of the 30S subunit head. Binds mRNA in the 70S ribosome, positioning it for translation. The chain is Small ribosomal subunit protein uS3 from Haemophilus influenzae (strain PittEE).